A 313-amino-acid chain; its full sequence is Dehydrogenase/reductase SDR family member 1 (313 aa).

Isoleucine 19 contacts NAD(+). Omega-N-methylarginine is present on arginine 21. Aspartate 64 contributes to the NAD(+) binding site. Serine 151 contacts substrate. NAD(+) contacts are provided by tyrosine 163, lysine 167, and threonine 198. Tyrosine 163 serves as the catalytic Proton acceptor.

This sequence belongs to the short-chain dehydrogenases/reductases (SDR) family.

The protein resides in the endoplasmic reticulum. The enzyme catalyses 17alpha-estradiol + NADP(+) = estrone + NADPH + H(+). The catalysed reaction is testosterone + NADP(+) = androst-4-ene-3,17-dione + NADPH + H(+). It carries out the reaction prostaglandin E1 + NADPH + H(+) = prostaglandin F1 + NADP(+). It catalyses the reaction isatin + NADPH + H(+) = 3-hydroxyindolin-2-one + NADP(+). NADPH-dependent oxidoreductase which catalyzes the reduction of some steroids (estrone, androstene-3,17-dione and cortisone) as well as prostaglandin E1, isatin and xenobiotics in vitro. May have a role in steroid and/or xenobiotic metabolism. In Mus musculus (Mouse), this protein is Dehydrogenase/reductase SDR family member 1.